Here is a 427-residue protein sequence, read N- to C-terminus: Pseudouridylate synthase 1 homolog (427 aa).

A disordered region spans residues 20–83 (GPRPSCSPRM…DEERREKPPK (64 aa)). A compositionally biased stretch (basic and acidic residues) spans 44–79 (QDRRSCSGRAGGDRVWEDGEHPAKKLKSGGDEERRE). The active-site Nucleophile is the D146. A disordered region spans residues 407 to 427 (GGTGAKVPSPLEGSEGDGDTD). S415 and S420 each carry phosphoserine. At T426 the chain carries Phosphothreonine.

Belongs to the tRNA pseudouridine synthase TruA family. As to quaternary structure, monomer. Forms a complex with RARG and the SRA1 RNA in the nucleus. In terms of tissue distribution, widely expressed. High levels of expression found in brain and skeletal muscle.

It localises to the mitochondrion. The protein resides in the nucleus. It is found in the cytoplasm. The catalysed reaction is a uridine in tRNA = a pseudouridine in tRNA. It catalyses the reaction uridine(38/39/40) in tRNA = pseudouridine(38/39/40) in tRNA. It carries out the reaction a uridine in mRNA = a pseudouridine in mRNA. In terms of biological role, pseudouridylate synthase that catalyzes pseudouridylation of tRNAs and mRNAs. Acts on positions 27/28 in the anticodon stem and also positions 34 and 36 in the anticodon of an intron containing tRNA. Also catalyzes pseudouridylation of mRNAs: mediates pseudouridylation of mRNAs with the consensus sequence 5'-UGUAG-3'. Acts as a regulator of pre-mRNA splicing by mediating pseudouridylation of pre-mRNAs at locations associated with alternatively spliced regions. Pseudouridylation of pre-mRNAs near splice sites directly regulates mRNA splicing and mRNA 3'-end processing. Involved in regulation of nuclear receptor activity through pseudouridylation of SRA1 mRNA. The protein is Pseudouridylate synthase 1 homolog of Homo sapiens (Human).